Here is a 345-residue protein sequence, read N- to C-terminus: Sorting nexin-15 (345 aa).

The PX domain occupies 1–130 (MSRQAKDDFL…EFFRGGEVTR (130 aa)). An Omega-N-methylarginine modification is found at Arg105. Residues 133–163 (EVSGDLHILPPPLIPTPPPDEPRVQPHETWL) are disordered. Pro residues predominate over residues 141–151 (LPPPLIPTPPP). 2 positions are modified to phosphoserine: Ser208 and Ser234. The disordered stretch occupies residues 226–274 (SKEEGAGPSPTHIGELAALEAGSGRPDQEPWEPGGQAEEDDEEGEPAPA). The MIT domain maps to 272-345 (APAYLSQATE…AEEILHLHLS (74 aa)).

It belongs to the sorting nexin family.

May be involved in several stages of intracellular trafficking. Overexpression of SNX15 disrupts the normal trafficking of proteins from the plasma membrane to recycling endosomes or the TGN. This is Sorting nexin-15 (SNX15) from Bos taurus (Bovine).